The sequence spans 336 residues: Galactose/methyl galactoside import permease protein MglC (336 aa).

Topologically, residues 1 to 16 are periplasmic; the sequence is MSALNKKSFLTYLKEG. Residues 17–37 traverse the membrane as a helical segment; it reads GIYVVLLVLLAIIIFQDPTFL. Over 38-52 the chain is Cytoplasmic; sequence SLLNLSNILTQSSVR. A helical transmembrane segment spans residues 53–73; it reads IIIALGVAGLIVTQGTDLSAG. Residues 74–106 are Periplasmic-facing; it reads RQVGLAAVVAATLLQSMDNANKVFPEMATMPIA. Helical transmembrane passes span 107 to 127 and 128 to 148; these read LVIL…GLII and AYLN…VYGI. The Periplasmic portion of the chain corresponds to 149–180; sequence NSLYYDFVGASPISGFDSGFSTFAQGFVALGS. Residues 181–201 form a helical membrane-spanning segment; sequence FRLSYITFYALIAVAFVWVLW. The Cytoplasmic segment spans residues 202–226; it reads NKTRFGKNIFAIGGNPEAAKVSGVN. A helical membrane pass occupies residues 227–247; sequence VGLNLLMIYALSGVFYAFGGM. The Periplasmic segment spans residues 248–256; the sequence is LEAGRIGSA. A helical membrane pass occupies residues 257–277; sequence TNNLGFMYELDAIAACVVGGV. Ser-278 is a topological domain (cytoplasmic). Residues 279–299 form a helical membrane-spanning segment; that stretch reads FSGGVGTVIGVVTGVIIFTVI. The Periplasmic portion of the chain corresponds to 300–305; the sequence is NYGLTY. Residues 306-326 traverse the membrane as a helical segment; sequence IGVNPYWQYIIKGAIIIFAVA. Topologically, residues 327 to 336 are cytoplasmic; sequence LDSLKYARKK.

The protein belongs to the binding-protein-dependent transport system permease family. AraH/RbsC subfamily. As to quaternary structure, the complex is composed of one ATP-binding protein (MglA), two transmembrane proteins (MglC) and a solute-binding protein (MglB).

The protein resides in the cell inner membrane. In terms of biological role, part of the ABC transporter complex MglABC involved in galactose/methyl galactoside import. Probably responsible for the translocation of the substrate across the membrane. The polypeptide is Galactose/methyl galactoside import permease protein MglC (mglC) (Escherichia coli (strain K12)).